A 105-amino-acid chain; its full sequence is Large ribosomal subunit protein uL24 (105 aa).

Over residues Asp-77–Lys-93 the composition is skewed to basic and acidic residues. The interval Asp-77–Leu-105 is disordered.

The protein belongs to the universal ribosomal protein uL24 family. Part of the 50S ribosomal subunit.

Its function is as follows. One of two assembly initiator proteins, it binds directly to the 5'-end of the 23S rRNA, where it nucleates assembly of the 50S subunit. Functionally, one of the proteins that surrounds the polypeptide exit tunnel on the outside of the subunit. The sequence is that of Large ribosomal subunit protein uL24 from Mycolicibacterium gilvum (strain PYR-GCK) (Mycobacterium gilvum (strain PYR-GCK)).